The chain runs to 351 residues: MSATSASVTRHDWSLAEVKALFEQPFNDLLFQAQTVHRQHFDPNRVQVSTLLSIKTGACPEDCKYCPQSGHYNTGLDKEKLMEVQKVLEAAAEAKAIGSTRFCMGAAWKHPSAKDMPYVLKMVEGVKAMGLETCMTLGKLDQEQTRALAAAGLDYYNHNLDTSPEFYGNIITTRTYAERLETLSYVREAGMKICSGGILGMGESLDDRAGLLIQLANLPEHPESVPINMLVKVKGTPLAEEQDVDPFDFIRMLAVARIMMPKSHVRLSAGREQMNEQMQALAFFAGANSIFYGEKLLTTANPQADKDMQLFARLGIKPEERQEHADEVHQAAIEQALIEQRDSKLFYNAAV.

Positions 44–262 (NRVQVSTLLS…LAVARIMMPK (219 aa)) constitute a Radical SAM core domain. [4Fe-4S] cluster-binding residues include Cys59, Cys63, and Cys66. [2Fe-2S] cluster contacts are provided by Cys103, Cys134, Cys194, and Arg266.

The protein belongs to the radical SAM superfamily. Biotin synthase family. Homodimer. [4Fe-4S] cluster serves as cofactor. The cofactor is [2Fe-2S] cluster.

The catalysed reaction is (4R,5S)-dethiobiotin + (sulfur carrier)-SH + 2 reduced [2Fe-2S]-[ferredoxin] + 2 S-adenosyl-L-methionine = (sulfur carrier)-H + biotin + 2 5'-deoxyadenosine + 2 L-methionine + 2 oxidized [2Fe-2S]-[ferredoxin]. Its pathway is cofactor biosynthesis; biotin biosynthesis; biotin from 7,8-diaminononanoate: step 2/2. Its function is as follows. Catalyzes the conversion of dethiobiotin (DTB) to biotin by the insertion of a sulfur atom into dethiobiotin via a radical-based mechanism. The sequence is that of Biotin synthase from Stutzerimonas stutzeri (strain A1501) (Pseudomonas stutzeri).